A 972-amino-acid chain; its full sequence is Fibroblast growth factor receptor (972 aa).

Residues 1-43 (MSLPRCPRTRTVMFSRTLTRCYPQRTLWIAILCVICSWTLSTA) form the signal peptide. Residues 44 to 547 (GATTIRDKEV…NNMQPTSKTQ (504 aa)) are Extracellular-facing. The 96-residue stretch at 57–152 (APQDLTAIPV…YIEASGTPPI (96 aa)) folds into the Fibronectin type-III domain. N-linked (GlcNAc...) asparagine glycans are attached at residues N109, N121, N191, N203, N239, N272, N315, N390, N398, N419, N422, and N460. An Ig-like C2-type 1 domain is found at 150-242 (PPIPPTLRRN…GQPIHVNFTL (93 aa)). A disulfide bond links C176 and C226. 2 Ig-like C2-type domains span residues 282–374 (PRFT…YDVK) and 383–517 (PIMS…AYLD). C306 and C358 form a disulfide bridge. An intrachain disulfide couples C403 to C501. Residues 548–568 (LIIFSVVGFVVVLILVTCIAI) traverse the membrane as a helical segment. Topologically, residues 569-972 (LCKQTQVRHR…QTRDCCPYAN (404 aa)) are cytoplasmic. The Protein kinase domain occupies 639–925 (LTVGKTIGEG…ISVSSNQDYL (287 aa)). ATP contacts are provided by residues 645-653 (IGEGAFGKV) and K673. D781 serves as the catalytic Proton acceptor. Y812 carries the post-translational modification Phosphotyrosine; by autocatalysis.

The protein belongs to the protein kinase superfamily. Tyr protein kinase family. Fibroblast growth factor receptor subfamily.

Its subcellular location is the membrane. The catalysed reaction is L-tyrosyl-[protein] + ATP = O-phospho-L-tyrosyl-[protein] + ADP + H(+). Its function is as follows. Receptor for basic fibroblast growth factor. The chain is Fibroblast growth factor receptor (FGFR) from Strongylocentrotus purpuratus (Purple sea urchin).